Reading from the N-terminus, the 647-residue chain is Threonine--tRNA ligase (647 aa).

The TGS domain maps to 1-61 (MIKITFPDGA…EEDGSIEIVT (61 aa)). The catalytic stretch occupies residues 240–538 (DHRKLGKELD…LIETYKGAFP (299 aa)). Zn(2+) is bound by residues Cys334, His385, and His515.

Belongs to the class-II aminoacyl-tRNA synthetase family. As to quaternary structure, homodimer. Zn(2+) serves as cofactor.

Its subcellular location is the cytoplasm. The enzyme catalyses tRNA(Thr) + L-threonine + ATP = L-threonyl-tRNA(Thr) + AMP + diphosphate + H(+). Catalyzes the attachment of threonine to tRNA(Thr) in a two-step reaction: L-threonine is first activated by ATP to form Thr-AMP and then transferred to the acceptor end of tRNA(Thr). Also edits incorrectly charged L-seryl-tRNA(Thr). The sequence is that of Threonine--tRNA ligase from Streptococcus pyogenes serotype M2 (strain MGAS10270).